A 302-amino-acid chain; its full sequence is Bifunctional protein FolD 2 (302 aa).

Residues 170 to 172 (GRS), serine 195, and isoleucine 236 each bind NADP(+).

It belongs to the tetrahydrofolate dehydrogenase/cyclohydrolase family. In terms of assembly, homodimer.

The catalysed reaction is (6R)-5,10-methylene-5,6,7,8-tetrahydrofolate + NADP(+) = (6R)-5,10-methenyltetrahydrofolate + NADPH. It catalyses the reaction (6R)-5,10-methenyltetrahydrofolate + H2O = (6R)-10-formyltetrahydrofolate + H(+). It participates in one-carbon metabolism; tetrahydrofolate interconversion. Its function is as follows. Catalyzes the oxidation of 5,10-methylenetetrahydrofolate to 5,10-methenyltetrahydrofolate and then the hydrolysis of 5,10-methenyltetrahydrofolate to 10-formyltetrahydrofolate. The protein is Bifunctional protein FolD 2 of Paracoccus denitrificans (strain Pd 1222).